Consider the following 140-residue polypeptide: ATP synthase epsilon chain (140 aa).

This sequence belongs to the ATPase epsilon chain family. As to quaternary structure, F-type ATPases have 2 components, CF(1) - the catalytic core - and CF(0) - the membrane proton channel. CF(1) has five subunits: alpha(3), beta(3), gamma(1), delta(1), epsilon(1). CF(0) has three main subunits: a, b and c.

The protein resides in the cell inner membrane. Functionally, produces ATP from ADP in the presence of a proton gradient across the membrane. The protein is ATP synthase epsilon chain of Nitrosomonas eutropha (strain DSM 101675 / C91 / Nm57).